A 117-amino-acid chain; its full sequence is Immunoglobulin heavy variable 4-38-2 (117 aa).

The N-terminal stretch at 1–19 is a signal peptide; it reads MKHLWFFLLLVAAPRWVLS. A framework-1 region spans residues 20-44; it reads QVQLQESGPGLVKPSETLSLTCTVS. Residues 20–117 enclose the Ig-like domain; it reads QVQLQESGPG…ADTAVYYCAR (98 aa). Cys41 and Cys115 are joined by a disulfide. Positions 45-53 are complementarity-determining-1; that stretch reads GYSISSGYY. The segment at 54–70 is framework-2; sequence WGWIRQPPGKGLEWIGS. The segment at 71–77 is complementarity-determining-2; the sequence is IYHSGST. The segment at 78–115 is framework-3; that stretch reads YYNPSLKSRVTISVDTSKNQFSLKLSSVTAADTAVYYC. The interval 116 to 117 is complementarity-determining-3; that stretch reads AR.

As to quaternary structure, immunoglobulins are composed of two identical heavy chains and two identical light chains; disulfide-linked.

The protein resides in the secreted. It localises to the cell membrane. Its function is as follows. V region of the variable domain of immunoglobulin heavy chains that participates in the antigen recognition. Immunoglobulins, also known as antibodies, are membrane-bound or secreted glycoproteins produced by B lymphocytes. In the recognition phase of humoral immunity, the membrane-bound immunoglobulins serve as receptors which, upon binding of a specific antigen, trigger the clonal expansion and differentiation of B lymphocytes into immunoglobulins-secreting plasma cells. Secreted immunoglobulins mediate the effector phase of humoral immunity, which results in the elimination of bound antigens. The antigen binding site is formed by the variable domain of one heavy chain, together with that of its associated light chain. Thus, each immunoglobulin has two antigen binding sites with remarkable affinity for a particular antigen. The variable domains are assembled by a process called V-(D)-J rearrangement and can then be subjected to somatic hypermutations which, after exposure to antigen and selection, allow affinity maturation for a particular antigen. The chain is Immunoglobulin heavy variable 4-38-2 from Homo sapiens (Human).